Consider the following 257-residue polypeptide: Hydroxyacylglutathione hydrolase (257 aa).

7 residues coordinate Zn(2+): His-56, His-58, Asp-60, His-61, His-112, Asp-131, and His-169.

This sequence belongs to the metallo-beta-lactamase superfamily. Glyoxalase II family. As to quaternary structure, monomer. Zn(2+) is required as a cofactor.

The catalysed reaction is an S-(2-hydroxyacyl)glutathione + H2O = a 2-hydroxy carboxylate + glutathione + H(+). It participates in secondary metabolite metabolism; methylglyoxal degradation; (R)-lactate from methylglyoxal: step 2/2. Functionally, thiolesterase that catalyzes the hydrolysis of S-D-lactoyl-glutathione to form glutathione and D-lactic acid. The sequence is that of Hydroxyacylglutathione hydrolase from Ectopseudomonas mendocina (strain ymp) (Pseudomonas mendocina).